Consider the following 458-residue polypeptide: Transmembrane protein 143 (458 aa).

2 helical membrane passes run 277–297 (LLNL…GMVI) and 298–318 (LSDL…FMGV). The residue at position 329 (serine 329) is a Phosphoserine.

It is found in the membrane. The protein is Transmembrane protein 143 (Tmem143) of Mus musculus (Mouse).